The following is a 483-amino-acid chain: Dual specificity protein phosphatase 10 (483 aa).

Residues 169-286 (PSQGPVIIDC…FKQNHGNLCD (118 aa)) enclose the Rhodanese domain. The interval 200 to 216 (KISRRRLQQGKITVLDL) is interaction with MAP kinases. One can recognise a Tyrosine-protein phosphatase domain in the interval 322–465 (ELTPILPFLF…LLEFEEDLNN (144 aa)). C409 functions as the Phosphocysteine intermediate in the catalytic mechanism.

This sequence belongs to the protein-tyrosine phosphatase family. Non-receptor class dual specificity subfamily. As to quaternary structure, monomer. Interacts with MAPK14.

It is found in the cytoplasm. Its subcellular location is the nucleus. It carries out the reaction O-phospho-L-tyrosyl-[protein] + H2O = L-tyrosyl-[protein] + phosphate. The catalysed reaction is O-phospho-L-seryl-[protein] + H2O = L-seryl-[protein] + phosphate. The enzyme catalyses O-phospho-L-threonyl-[protein] + H2O = L-threonyl-[protein] + phosphate. Functionally, protein phosphatase involved in the inactivation of MAP kinases. Has a specificity for the MAPK11/MAPK12/MAPK13/MAPK14 subfamily. It preferably dephosphorylates p38. In Mus musculus (Mouse), this protein is Dual specificity protein phosphatase 10 (Dusp10).